The following is a 259-amino-acid chain: Global transcriptional regulator CodY (259 aa).

Residues 1–155 (MNLLEKTRKI…GATVVGMEIL (155 aa)) are GAF domain. The H-T-H motif DNA-binding region spans 203 to 222 (ASKIADRVGITRSVIVNALR). A Phosphoserine modification is found at Ser215.

The protein belongs to the CodY family.

The protein localises to the cytoplasm. In terms of biological role, DNA-binding global transcriptional regulator which is involved in the adaptive response to starvation and acts by directly or indirectly controlling the expression of numerous genes in response to nutrient availability. During rapid exponential growth, CodY is highly active and represses genes whose products allow adaptation to nutrient depletion. In Lysinibacillus sphaericus (strain C3-41), this protein is Global transcriptional regulator CodY.